A 152-amino-acid polypeptide reads, in one-letter code: SsrA-binding protein (152 aa).

The protein belongs to the SmpB family.

It is found in the cytoplasm. Functionally, required for rescue of stalled ribosomes mediated by trans-translation. Binds to transfer-messenger RNA (tmRNA), required for stable association of tmRNA with ribosomes. tmRNA and SmpB together mimic tRNA shape, replacing the anticodon stem-loop with SmpB. tmRNA is encoded by the ssrA gene; the 2 termini fold to resemble tRNA(Ala) and it encodes a 'tag peptide', a short internal open reading frame. During trans-translation Ala-aminoacylated tmRNA acts like a tRNA, entering the A-site of stalled ribosomes, displacing the stalled mRNA. The ribosome then switches to translate the ORF on the tmRNA; the nascent peptide is terminated with the 'tag peptide' encoded by the tmRNA and targeted for degradation. The ribosome is freed to recommence translation, which seems to be the essential function of trans-translation. In Rickettsia felis (strain ATCC VR-1525 / URRWXCal2) (Rickettsia azadi), this protein is SsrA-binding protein.